The primary structure comprises 193 residues: NAD(P)H-quinone oxidoreductase subunit I (193 aa).

4Fe-4S ferredoxin-type domains are found at residues 56–85 and 96–125; these read GRIH…VDWE and KHYS…MTEE. The [4Fe-4S] cluster site is built by Cys-65, Cys-68, Cys-71, Cys-75, Cys-105, Cys-108, Cys-111, and Cys-115. The interval 174 to 193 is disordered; sequence NLPKGSQRAGQHPEDLVKAE. The segment covering 184–193 has biased composition (basic and acidic residues); that stretch reads QHPEDLVKAE.

This sequence belongs to the complex I 23 kDa subunit family. As to quaternary structure, NDH-1 is composed of at least 11 different subunits. Requires [4Fe-4S] cluster as cofactor.

It localises to the cellular thylakoid membrane. The enzyme catalyses a plastoquinone + NADH + (n+1) H(+)(in) = a plastoquinol + NAD(+) + n H(+)(out). It carries out the reaction a plastoquinone + NADPH + (n+1) H(+)(in) = a plastoquinol + NADP(+) + n H(+)(out). Functionally, NDH-1 shuttles electrons from an unknown electron donor, via FMN and iron-sulfur (Fe-S) centers, to quinones in the respiratory and/or the photosynthetic chain. The immediate electron acceptor for the enzyme in this species is believed to be plastoquinone. Couples the redox reaction to proton translocation, and thus conserves the redox energy in a proton gradient. The polypeptide is NAD(P)H-quinone oxidoreductase subunit I (Synechocystis sp. (strain ATCC 27184 / PCC 6803 / Kazusa)).